We begin with the raw amino-acid sequence, 248 residues long: MAGHSKWANIKHRKASQDAKRGKIFTKLIREITVAAKNGALPEDNPRLRAVIDKALTVNMKKDTIEKAIQRGAGGGDDSNFDELTYEGYGPGGVAVYVEVMTDNRNRTVAEVRHAFSKHGGNLGTDGSVAYLFSKTGVILFAPDVDEDAVMEAALEAGAQDVIANDDGSVEVQTSAEDFMAVKDALMAAGLTPESADVSMVPATMAPLDVENGEKVMKLIEMLEDLDDVQNVYSNADIPDEVLESMGG.

Belongs to the TACO1 family.

It is found in the cytoplasm. In Hahella chejuensis (strain KCTC 2396), this protein is Probable transcriptional regulatory protein HCH_04926.